Consider the following 108-residue polypeptide: UPF0145 protein AF_0869 (108 aa).

It belongs to the UPF0145 family.

The protein is UPF0145 protein AF_0869 of Archaeoglobus fulgidus (strain ATCC 49558 / DSM 4304 / JCM 9628 / NBRC 100126 / VC-16).